The following is a 159-amino-acid chain: MAPVTLSTVDDDLKEVIQHLFEIQSAVHGYLGPETQTELVRKIKNLTLALSTLSTHTKPQPPSQDDEQKGSANDPLLRDIQLPPEIIDYVDAARNPDIYTREFVELVQRGNQDLKGKKEAFASFRDVLAREMRSAMPECRGEVERVLAATGGARADTEQ.

Positions 54–77 (STHTKPQPPSQDDEQKGSANDPLL) are disordered.

The protein belongs to the Mediator complex subunit 10 family. Component of the Mediator complex.

It is found in the nucleus. Its function is as follows. Component of the Mediator complex, a coactivator involved in the regulated transcription of nearly all RNA polymerase II-dependent genes. Mediator functions as a bridge to convey information from gene-specific regulatory proteins to the basal RNA polymerase II transcription machinery. Mediator is recruited to promoters by direct interactions with regulatory proteins and serves as a scaffold for the assembly of a functional preinitiation complex with RNA polymerase II and the general transcription factors. The chain is Mediator of RNA polymerase II transcription subunit 10 (nut2) from Aspergillus fumigatus (strain ATCC MYA-4609 / CBS 101355 / FGSC A1100 / Af293) (Neosartorya fumigata).